The sequence spans 160 residues: S-ribosylhomocysteine lyase (160 aa).

Residues H57, H61, and C127 each contribute to the Fe cation site.

Belongs to the LuxS family. In terms of assembly, homodimer. It depends on Fe cation as a cofactor.

It catalyses the reaction S-(5-deoxy-D-ribos-5-yl)-L-homocysteine = (S)-4,5-dihydroxypentane-2,3-dione + L-homocysteine. Involved in the synthesis of autoinducer 2 (AI-2) which is secreted by bacteria and is used to communicate both the cell density and the metabolic potential of the environment. The regulation of gene expression in response to changes in cell density is called quorum sensing. Catalyzes the transformation of S-ribosylhomocysteine (RHC) to homocysteine (HC) and 4,5-dihydroxy-2,3-pentadione (DPD). The chain is S-ribosylhomocysteine lyase from Streptococcus pyogenes serotype M4 (strain MGAS10750).